A 208-amino-acid chain; its full sequence is Holliday junction resolvase RecU (208 aa).

Mg(2+) is bound by residues Thr87, Asp89, Glu102, and Gln121.

It belongs to the RecU family. The cofactor is Mg(2+).

Its subcellular location is the cytoplasm. It catalyses the reaction Endonucleolytic cleavage at a junction such as a reciprocal single-stranded crossover between two homologous DNA duplexes (Holliday junction).. Functionally, endonuclease that resolves Holliday junction intermediates in genetic recombination. Cleaves mobile four-strand junctions by introducing symmetrical nicks in paired strands. Promotes annealing of linear ssDNA with homologous dsDNA. Required for DNA repair, homologous recombination and chromosome segregation. This chain is Holliday junction resolvase RecU, found in Staphylococcus aureus (strain MRSA252).